The following is a 250-amino-acid chain: Shieldin complex subunit 3 (250 aa).

The interval 28-83 (QDFPTRPLSRFIPWFPYDGSKLPLRPKRSPPVISEEAAEDVKQYLTISEHDAKSHS) is sufficient for interaction with MAD2L2. The span at 108 to 119 (LKEQTNSGNLGK) shows a compositional bias: polar residues. Residues 108–129 (LKEQTNSGNLGKQSEKGKQHKR) form a disordered region.

As to quaternary structure, component of the shieldin complex, consisting of SHLD1, SHLD2, SHLD3 and MAD2L2/REV7. Within the complex, SHLD2 forms a scaffold which interacts with a SHLD3-MAD2L2 subcomplex via its N-terminus, and with SHLD1 via its C-terminus. Interacts with ASTE1.

It localises to the chromosome. Functionally, component of the shieldin complex, which plays an important role in repair of DNA double-stranded breaks (DSBs). During G1 and S phase of the cell cycle, the complex functions downstream of TP53BP1 to promote non-homologous end joining (NHEJ) and suppress DNA end resection. Mediates various NHEJ-dependent processes including immunoglobulin class-switch recombination, and fusion of unprotected telomeres. The protein is Shieldin complex subunit 3 of Homo sapiens (Human).